Consider the following 308-residue polypeptide: tRNA pseudouridine synthase B (308 aa).

The active-site Nucleophile is the Asp47.

It belongs to the pseudouridine synthase TruB family. Type 1 subfamily.

It catalyses the reaction uridine(55) in tRNA = pseudouridine(55) in tRNA. Functionally, responsible for synthesis of pseudouridine from uracil-55 in the psi GC loop of transfer RNAs. The sequence is that of tRNA pseudouridine synthase B from Xanthomonas euvesicatoria pv. vesicatoria (strain 85-10) (Xanthomonas campestris pv. vesicatoria).